Consider the following 435-residue polypeptide: ATP-dependent RNA helicase SUB2 (435 aa).

The interval 1 to 40 (MSHEGQEELLDYSDSEEIAVPTTTAPSAAAGEGANDKEAD) is disordered. Residues 7 to 17 (EELLDYSDSEE) show a composition bias toward acidic residues. The segment covering 19 to 33 (AVPTTTAPSAAAGEG) has biased composition (low complexity). The Q motif motif lies at 51-79 (TGFRDFLLKPELLRAIGDCGFEHPSEVQQ). The Helicase ATP-binding domain maps to 82-257 (IPQSILGTDV…KKFMQNPLEI (176 aa)). 95 to 102 (AKSGLGKT) serves as a coordination point for ATP. The DECD box motif lies at 204–207 (DECD). Residues 269 to 430 (GLQQYYIKLD…EFPEEGVDPS (162 aa)) enclose the Helicase C-terminal domain.

Belongs to the DEAD box helicase family. DECD subfamily.

It is found in the nucleus. It carries out the reaction ATP + H2O = ADP + phosphate + H(+). Functionally, ATP-binding RNA helicase involved in transcription elongation and required for the export of mRNA out of the nucleus. SUB2 also plays a role in pre-mRNA splicing and spliceosome assembly. May be involved in rDNA and telomeric silencing, and maintenance of genome integrity. The sequence is that of ATP-dependent RNA helicase SUB2 (SUB2) from Debaryomyces hansenii (strain ATCC 36239 / CBS 767 / BCRC 21394 / JCM 1990 / NBRC 0083 / IGC 2968) (Yeast).